A 136-amino-acid polypeptide reads, in one-letter code: Nanos homolog 2 (136 aa).

Positions 27–51 are disordered; that stretch reads KQRQEGEVAEEPNSRPQEKSEQDLE. Residues 28 to 48 show a composition bias toward basic and acidic residues; sequence QRQEGEVAEEPNSRPQEKSEQ. The Nanos-type zinc-finger motif lies at 60–114; sequence ICNFCKHNGESRHVYTSHQLKTPEGVVVCPILRHYVCPLCGATGDQAHTLKYCPL. Zn(2+) contacts are provided by Cys-61, Cys-64, His-77, Cys-88, Cys-96, Cys-99, His-107, and Cys-112. Short sequence motifs (C2HC) lie at residues 61–88 and 96–112; these read CNFC…VVVC and CPLC…LKYC.

It belongs to the nanos family. Interacts with CNOT1, CNOT3, CNOT6L, CNOT7 and CNOT9. Predominantly expressed in male germ cells. Expressed in self-renewing spermatogonial stem cells and developing gonads.

The protein resides in the cytoplasm. Its subcellular location is the P-body. The protein localises to the perinuclear region. Functionally, plays a key role in the sexual differentiation of germ cells by promoting the male fate but suppressing the female fate. Represses the female fate pathways by suppressing meiosis, which in turn results in the promotion of the male fate. Maintains the suppression of meiosis by preventing STRA8 expression, which is required for premeiotic DNA replication, after CYP26B1 is decreased. Regulates the localization of the CCR4-NOT deadenylation complex to P-bodies and plays a role in recruiting the complex to trigger the degradation of mRNAs involved in meiosis. Required for the maintenance of the spermatogonial stem cell population. Not essential for the assembly of P-bodies but is required for the maintenance of their normal state. The sequence is that of Nanos homolog 2 (Nanos2) from Mus musculus (Mouse).